A 502-amino-acid polypeptide reads, in one-letter code: ATP synthase subunit alpha (502 aa).

169 to 176 (GDRQTGKT) contributes to the ATP binding site.

Belongs to the ATPase alpha/beta chains family. As to quaternary structure, F-type ATPases have 2 components, CF(1) - the catalytic core - and CF(0) - the membrane proton channel. CF(1) has five subunits: alpha(3), beta(3), gamma(1), delta(1), epsilon(1). CF(0) has three main subunits: a(1), b(2) and c(9-12). The alpha and beta chains form an alternating ring which encloses part of the gamma chain. CF(1) is attached to CF(0) by a central stalk formed by the gamma and epsilon chains, while a peripheral stalk is formed by the delta and b chains.

It localises to the cell inner membrane. It catalyses the reaction ATP + H2O + 4 H(+)(in) = ADP + phosphate + 5 H(+)(out). Produces ATP from ADP in the presence of a proton gradient across the membrane. The alpha chain is a regulatory subunit. In Solidesulfovibrio magneticus (strain ATCC 700980 / DSM 13731 / RS-1) (Desulfovibrio magneticus), this protein is ATP synthase subunit alpha.